The primary structure comprises 706 residues: Elongation factor G (706 aa).

The 288-residue stretch at 8–295 (ERYRNFGIMA…AVIDYLPSPL (288 aa)) folds into the tr-type G domain. GTP contacts are provided by residues 17–24 (AHIDAGKT), 92–96 (DTPGH), and 146–149 (NKMD).

The protein belongs to the TRAFAC class translation factor GTPase superfamily. Classic translation factor GTPase family. EF-G/EF-2 subfamily.

It localises to the cytoplasm. Functionally, catalyzes the GTP-dependent ribosomal translocation step during translation elongation. During this step, the ribosome changes from the pre-translocational (PRE) to the post-translocational (POST) state as the newly formed A-site-bound peptidyl-tRNA and P-site-bound deacylated tRNA move to the P and E sites, respectively. Catalyzes the coordinated movement of the two tRNA molecules, the mRNA and conformational changes in the ribosome. The chain is Elongation factor G from Jannaschia sp. (strain CCS1).